The primary structure comprises 696 residues: METKVQVECGGRTITIETGKMAKQASGAVVVSSGDTRVLVTAVATKTAKEGQDFFPLTVNYQEKAYAGGKIPGGFFKREARPSDNETLTCRLIDRPIRPLFPDNFLNDTQIMATVISADKDNDPGILSMVGASAALMVSDIPFQGPIAGVKVGRIDGRFVANPGFEEMEKSDIEIVVAASKDAIIMVEGSAAEVSEEDMLEAIFFGHAAIQGLLAAQVELAEKAGVAKREVLPPVVNEALKAKVKELAYSRMKEAVRIKSKVERHNTIDTITGEVLTALAEEFEGAAKEIKGFLGDFEYDLVREHIIKDGERIDGRDTKTIRQITTEVGLLPRAHGSALFTRGETQALVVATLGTSIDEQRIDSLFGESKKRFLLHYNFPPFSVGETSFRLAPGRREIGHGMLAERALARVVPKHESFPYTIRIVSDILESNGSSSMASVCGGSMSMMDAGIPIKAPVAGIAMGLIKEGDDFAILSDILGDEDHLGDMDFKVAGTSTGVTALQMDIKIGGVTREIMGVALKQAHEGRLHILSKMAETIGTSKAELSTFAPRITTIYVKTDKIRDVIGSGGKNIRGITEATGVTIDIDDTGKINIASTDKAACDMAIKMIRDLTAEAEEGKLYMGLVKKVMEFGAFVEIFPGTDGLVHISELDTERVKNVTDVLKEGDKVLVKCIGIDKQGKIKLSRKEALGASLPE.

Mg(2+) is bound by residues aspartate 483 and aspartate 489. Positions 550 to 609 (PRITTIYVKTDKIRDVIGSGGKNIRGITEATGVTIDIDDTGKINIASTDKAACDMAIKMI) constitute a KH domain. In terms of domain architecture, S1 motif spans 619-687 (GKLYMGLVKK…KQGKIKLSRK (69 aa)).

This sequence belongs to the polyribonucleotide nucleotidyltransferase family. Requires Mg(2+) as cofactor.

It is found in the cytoplasm. The enzyme catalyses RNA(n+1) + phosphate = RNA(n) + a ribonucleoside 5'-diphosphate. Functionally, involved in mRNA degradation. Catalyzes the phosphorolysis of single-stranded polyribonucleotides processively in the 3'- to 5'-direction. The chain is Polyribonucleotide nucleotidyltransferase from Geotalea daltonii (strain DSM 22248 / JCM 15807 / FRC-32) (Geobacter daltonii).